The following is a 66-amino-acid chain: Phylloseptin-H7 (66 aa).

A signal peptide spans methionine 1 to cysteine 22. The propeptide occupies glutamate 23–glutamate 44. The interval glutamate 25–glutamate 44 is disordered. The span at glutamate 30–lysine 41 shows a compositional bias: acidic residues. Leucine 65 bears the Leucine amide mark.

In terms of tissue distribution, expressed by the skin glands.

It localises to the secreted. Functionally, has antimicrobial activity. This chain is Phylloseptin-H7, found in Pithecopus hypochondrialis (Orange-legged leaf frog).